A 930-amino-acid chain; its full sequence is Serine/threonine-protein kinase PknD (930 aa).

One can recognise a Protein kinase domain in the interval 4–291; that stretch reads YDIIRMIGKG…ALKADIEQHL (288 aa). Residues 10–18 and K33 each bind ATP; that span reads IGKGGMGEV. D138 acts as the Proton acceptor in catalysis.

It belongs to the protein kinase superfamily. Ser/Thr protein kinase family. Autophosphorylated on serine and threonine residues.

It catalyses the reaction L-seryl-[protein] + ATP = O-phospho-L-seryl-[protein] + ADP + H(+). It carries out the reaction L-threonyl-[protein] + ATP = O-phospho-L-threonyl-[protein] + ADP + H(+). Its function is as follows. Together with the serine/threonine kinase Pkn1, may play a role in the specific interactions with host proteins during intracellular growth. This is Serine/threonine-protein kinase PknD from Chlamydia caviae (strain ATCC VR-813 / DSM 19441 / 03DC25 / GPIC) (Chlamydophila caviae).